A 114-amino-acid polypeptide reads, in one-letter code: MSLKDYLRQSISKDLEVRHRDSLKIRLGERHPLSVHQHMIAARQIIKSDNAEQQHVISSLSGFLDKQKSFLRVQQKALKQLEKLDVDEIIDTAAEVKAVSNDIKETLITSTELE.

It belongs to the herpesviridae UL96 family.

The sequence is that of Protein U68 (U68) from Human herpesvirus 6A (strain Uganda-1102) (HHV-6 variant A).